A 516-amino-acid polypeptide reads, in one-letter code: Gastrula zinc finger protein XlCGF53.1 (516 aa).

2 disordered regions span residues 1–33 (MGMW…GKKE) and 200–220 (GNQS…TDKP). Polar residues predominate over residues 200 to 218 (GNQSDCSINPLTEQIQGTD). 7 C2H2-type zinc fingers span residues 312–334 (YICS…QKTH), 354–376 (FPCS…QSSH), 382–404 (YACS…LKLH), 410–432 (FPCS…RRVH), 438–460 (YSCS…QRTH), 466–488 (FSCT…HRTH), and 494–516 (FSCT…HRTH).

It belongs to the krueppel C2H2-type zinc-finger protein family.

It is found in the nucleus. Its function is as follows. May be involved in transcriptional regulation. In Xenopus laevis (African clawed frog), this protein is Gastrula zinc finger protein XlCGF53.1.